Consider the following 63-residue polypeptide: Hypoxia-inducible lipid droplet-associated protein (63 aa).

A required for targeting to lipid droplets region spans residues 1-37; it reads MKHVLNLYLLGVVLTLLSIFVRVMESLEGLLESPSPG. Residues 7 to 23 form a helical membrane-spanning segment; it reads LYLLGVVLTLLSIFVRV. The disordered stretch occupies residues 31-63; that stretch reads LESPSPGTSWTTRSQLANTEPTKGLPDHPSRSM. Over residues 35-51 the composition is skewed to polar residues; sequence SPGTSWTTRSQLANTEP. Phosphoserine is present on Ser-44.

As to expression, highly expressed in renal cell carcinoma cells but barely detectable in adjacent normal kidney tissue. Detected in some cervical and endometrial cancers. Expression also detected in fetal kidney with little or no expression observed in normal adult heart, liver, lung, pancreas, prostate or spinal cord (at protein level).

It is found in the lipid droplet. The protein resides in the secreted. The protein localises to the membrane. Functionally, increases intracellular lipid accumulation. Stimulates expression of cytokines including IL6, MIF and VEGFA. Enhances cell growth and proliferation. This Homo sapiens (Human) protein is Hypoxia-inducible lipid droplet-associated protein (HILPDA).